Here is a 329-residue protein sequence, read N- to C-terminus: Glycerol-3-phosphate dehydrogenase [NAD(P)+] (329 aa).

NADPH is bound by residues serine 13, tryptophan 14, histidine 34, and lysine 105. Residues lysine 105, glycine 134, and serine 136 each coordinate sn-glycerol 3-phosphate. An NADPH-binding site is contributed by alanine 138. Residues lysine 189, aspartate 242, serine 252, arginine 253, and asparagine 254 each contribute to the sn-glycerol 3-phosphate site. Lysine 189 acts as the Proton acceptor in catalysis. Position 253 (arginine 253) interacts with NADPH. Residues valine 277 and glutamate 279 each contribute to the NADPH site.

It belongs to the NAD-dependent glycerol-3-phosphate dehydrogenase family.

The protein localises to the cytoplasm. The catalysed reaction is sn-glycerol 3-phosphate + NAD(+) = dihydroxyacetone phosphate + NADH + H(+). It catalyses the reaction sn-glycerol 3-phosphate + NADP(+) = dihydroxyacetone phosphate + NADPH + H(+). The protein operates within membrane lipid metabolism; glycerophospholipid metabolism. Its function is as follows. Catalyzes the reduction of the glycolytic intermediate dihydroxyacetone phosphate (DHAP) to sn-glycerol 3-phosphate (G3P), the key precursor for phospholipid synthesis. This Legionella pneumophila subsp. pneumophila (strain Philadelphia 1 / ATCC 33152 / DSM 7513) protein is Glycerol-3-phosphate dehydrogenase [NAD(P)+].